The following is a 150-amino-acid chain: Siroheme decarboxylase NirD subunit (150 aa).

Belongs to the Ahb/Nir family. In terms of assembly, probably forms a complex composed of NirD, NirL, NirG and NirH. All proteins are required for the total conversion of siroheme to didecarboxysiroheme.

It carries out the reaction siroheme + 2 H(+) = 12,18-didecarboxysiroheme + 2 CO2. The protein operates within porphyrin-containing compound metabolism. Its function is as follows. Involved in heme d1 biosynthesis. Catalyzes the decarboxylation of siroheme into didecarboxysiroheme. The sequence is that of Siroheme decarboxylase NirD subunit from Pseudomonas aeruginosa (strain ATCC 15692 / DSM 22644 / CIP 104116 / JCM 14847 / LMG 12228 / 1C / PRS 101 / PAO1).